A 155-amino-acid chain; its full sequence is Ribosomal RNA large subunit methyltransferase H (155 aa).

Gly103 lines the S-adenosyl-L-methionine pocket.

Belongs to the RNA methyltransferase RlmH family. As to quaternary structure, homodimer.

The protein resides in the cytoplasm. It catalyses the reaction pseudouridine(1915) in 23S rRNA + S-adenosyl-L-methionine = N(3)-methylpseudouridine(1915) in 23S rRNA + S-adenosyl-L-homocysteine + H(+). Functionally, specifically methylates the pseudouridine at position 1915 (m3Psi1915) in 23S rRNA. This is Ribosomal RNA large subunit methyltransferase H from Caulobacter vibrioides (strain ATCC 19089 / CIP 103742 / CB 15) (Caulobacter crescentus).